We begin with the raw amino-acid sequence, 232 residues long: MGQKVHPNGIRLGIVKAWNSTWYANTKEFADNLDSDFKVRQFLTKELAKASVSRIVIERPAKSIRVTIHTARPGIVIGKKGEDVEKLRKVVADIAGVPAQINIAEVRKPELDAKLVADSITSQLERRVMFRRAMKRAVQNAMRLGAKGIKVEVSGRLGGAEIARTEWYREGRVPLHTLRADIDYNTSEAHTTYGVIGVKVWIFKGEILGGMAAVEQPEPAAQPKKQQRKGRK.

The KH type-2 domain occupies 39-107 (VRQFLTKELA…PAQINIAEVR (69 aa)).

The protein belongs to the universal ribosomal protein uS3 family. Part of the 30S ribosomal subunit. Forms a tight complex with proteins S10 and S14.

In terms of biological role, binds the lower part of the 30S subunit head. Binds mRNA in the 70S ribosome, positioning it for translation. This chain is Small ribosomal subunit protein uS3, found in Yersinia pseudotuberculosis serotype O:1b (strain IP 31758).